A 230-amino-acid polypeptide reads, in one-letter code: NAD(P)H-quinone oxidoreductase subunit K, chloroplastic (230 aa).

[4Fe-4S] cluster-binding residues include cysteine 43, cysteine 44, cysteine 108, and cysteine 139.

The protein belongs to the complex I 20 kDa subunit family. NDH is composed of at least 16 different subunits, 5 of which are encoded in the nucleus. [4Fe-4S] cluster is required as a cofactor.

It is found in the plastid. The protein localises to the chloroplast thylakoid membrane. It catalyses the reaction a plastoquinone + NADH + (n+1) H(+)(in) = a plastoquinol + NAD(+) + n H(+)(out). The enzyme catalyses a plastoquinone + NADPH + (n+1) H(+)(in) = a plastoquinol + NADP(+) + n H(+)(out). Its function is as follows. NDH shuttles electrons from NAD(P)H:plastoquinone, via FMN and iron-sulfur (Fe-S) centers, to quinones in the photosynthetic chain and possibly in a chloroplast respiratory chain. The immediate electron acceptor for the enzyme in this species is believed to be plastoquinone. Couples the redox reaction to proton translocation, and thus conserves the redox energy in a proton gradient. The sequence is that of NAD(P)H-quinone oxidoreductase subunit K, chloroplastic from Lotus japonicus (Lotus corniculatus var. japonicus).